Consider the following 777-residue polypeptide: Endonuclease MutS2 (777 aa).

328-335 (GPNTGGKT) provides a ligand contact to ATP. A Smr domain is found at 702–777 (LDLRGKRYEE…GSGATIVIFK (76 aa)).

The protein belongs to the DNA mismatch repair MutS family. MutS2 subfamily. Homodimer. Binds to stalled ribosomes, contacting rRNA.

Endonuclease that is involved in the suppression of homologous recombination and thus may have a key role in the control of bacterial genetic diversity. In terms of biological role, acts as a ribosome collision sensor, splitting the ribosome into its 2 subunits. Detects stalled/collided 70S ribosomes which it binds and splits by an ATP-hydrolysis driven conformational change. Acts upstream of the ribosome quality control system (RQC), a ribosome-associated complex that mediates the extraction of incompletely synthesized nascent chains from stalled ribosomes and their subsequent degradation. Probably generates substrates for RQC. The chain is Endonuclease MutS2 from Streptococcus gordonii (strain Challis / ATCC 35105 / BCRC 15272 / CH1 / DL1 / V288).